Reading from the N-terminus, the 671-residue chain is UvrABC system protein B (671 aa).

The 384-residue stretch at 31-414 folds into the Helicase ATP-binding domain; it reads DGFEQGEKAQ…ELNQTDHKVE (384 aa). Residue 44-51 participates in ATP binding; sequence GATGTGKT. The Beta-hairpin signature appears at 97–120; sequence YYDYYQPEAYVPQSDTYIEKDSSI. The region spanning 435–601 is the Helicase C-terminal domain; the sequence is QIDDLVGEVN…TIVKPIRDVI (167 aa). In terms of domain architecture, UVR spans 630-665; it reads QNMIKTLTAQMQEAAKKLDFEEAANLRDAIMDLKKQ.

Belongs to the UvrB family. In terms of assembly, forms a heterotetramer with UvrA during the search for lesions. Interacts with UvrC in an incision complex.

It localises to the cytoplasm. In terms of biological role, the UvrABC repair system catalyzes the recognition and processing of DNA lesions. A damage recognition complex composed of 2 UvrA and 2 UvrB subunits scans DNA for abnormalities. Upon binding of the UvrA(2)B(2) complex to a putative damaged site, the DNA wraps around one UvrB monomer. DNA wrap is dependent on ATP binding by UvrB and probably causes local melting of the DNA helix, facilitating insertion of UvrB beta-hairpin between the DNA strands. Then UvrB probes one DNA strand for the presence of a lesion. If a lesion is found the UvrA subunits dissociate and the UvrB-DNA preincision complex is formed. This complex is subsequently bound by UvrC and the second UvrB is released. If no lesion is found, the DNA wraps around the other UvrB subunit that will check the other stand for damage. The chain is UvrABC system protein B from Lactobacillus johnsonii (strain CNCM I-12250 / La1 / NCC 533).